A 212-amino-acid chain; its full sequence is Cytidylate kinase (212 aa).

Residue 7-15 (GPAASGKGT) coordinates ATP.

This sequence belongs to the cytidylate kinase family. Type 1 subfamily.

Its subcellular location is the cytoplasm. It catalyses the reaction CMP + ATP = CDP + ADP. The enzyme catalyses dCMP + ATP = dCDP + ADP. This chain is Cytidylate kinase, found in Rhodopseudomonas palustris (strain BisB18).